A 146-amino-acid polypeptide reads, in one-letter code: Holo-[acyl-carrier-protein] synthase (146 aa).

2 residues coordinate Mg(2+): Asp9 and Glu63.

This sequence belongs to the P-Pant transferase superfamily. AcpS family. Mg(2+) serves as cofactor.

Its subcellular location is the cytoplasm. It catalyses the reaction apo-[ACP] + CoA = holo-[ACP] + adenosine 3',5'-bisphosphate + H(+). In terms of biological role, transfers the 4'-phosphopantetheine moiety from coenzyme A to a Ser of acyl-carrier-protein. The protein is Holo-[acyl-carrier-protein] synthase of Burkholderia orbicola (strain MC0-3).